A 190-amino-acid polypeptide reads, in one-letter code: Peptidyl-tRNA hydrolase (190 aa).

Tyr19 is a tRNA binding site. The Proton acceptor role is filled by His24. TRNA is bound by residues Tyr72, Asn74, and Asn121.

It belongs to the PTH family.

The protein localises to the mitochondrion. It catalyses the reaction an N-acyl-L-alpha-aminoacyl-tRNA + H2O = an N-acyl-L-amino acid + a tRNA + H(+). Peptidyl-tRNA hydrolase involved in the recycling of tRNA-Lys from diacetyl-lysyl-tRNA-Lys and is important for mitochondrial function. This is Peptidyl-tRNA hydrolase (PTH1) from Saccharomyces cerevisiae (strain ATCC 204508 / S288c) (Baker's yeast).